The chain runs to 452 residues: cAMP/cGMP-dependent 3',5'-cAMP/cGMP phosphodiesterase A (452 aa).

An N-terminal signal peptide occupies residues 1–23; sequence MALNKKLISLLLLIFIILNIVNS. Positions 24–49 are excised as a propeptide; the sequence is HQQEDCDDDDEDIGISAERSERRSVK. Asn101, Asn141, and Asn277 each carry an N-linked (GlcNAc...) asparagine glycan.

It belongs to the cyclic nucleotide phosphodiesterase class-II family.

It is found in the secreted. The protein resides in the extracellular space. The protein localises to the cell surface. The catalysed reaction is 3',5'-cyclic AMP + H2O = AMP + H(+). It catalyses the reaction 3',5'-cyclic GMP + H2O = GMP + H(+). With respect to regulation, inhibited by dithiotreitol (DTT). Phosphodiesterase which displays a preference for cAMP over cGMP. Involved in the degradation of extracellular cAMP. Maintains the responsiveness of cells to the chemoattractant cAMP during the aggregation phase of development. This is cAMP/cGMP-dependent 3',5'-cAMP/cGMP phosphodiesterase A (pdsA) from Dictyostelium discoideum (Social amoeba).